Here is a 457-residue protein sequence, read N- to C-terminus: Siroheme synthase (457 aa).

The tract at residues 1–204 (MDHLPIFCQL…ADEKAVNATT (204 aa)) is precorrin-2 dehydrogenase /sirohydrochlorin ferrochelatase. NAD(+) contacts are provided by residues 22–23 (DV) and 43–44 (LN). The residue at position 128 (Ser-128) is a Phosphoserine. The uroporphyrinogen-III C-methyltransferase stretch occupies residues 216 to 457 (GEVVLVGAGP…RDKLNWFSNH (242 aa)). Pro-225 provides a ligand contact to S-adenosyl-L-methionine. The Proton acceptor role is filled by Asp-248. Lys-270 (proton donor) is an active-site residue. S-adenosyl-L-methionine-binding positions include 301 to 303 (GGD), Ile-306, 331 to 332 (TA), Met-382, and Gly-411.

In the N-terminal section; belongs to the precorrin-2 dehydrogenase / sirohydrochlorin ferrochelatase family. The protein in the C-terminal section; belongs to the precorrin methyltransferase family.

It catalyses the reaction uroporphyrinogen III + 2 S-adenosyl-L-methionine = precorrin-2 + 2 S-adenosyl-L-homocysteine + H(+). The catalysed reaction is precorrin-2 + NAD(+) = sirohydrochlorin + NADH + 2 H(+). The enzyme catalyses siroheme + 2 H(+) = sirohydrochlorin + Fe(2+). Its pathway is cofactor biosynthesis; adenosylcobalamin biosynthesis; precorrin-2 from uroporphyrinogen III: step 1/1. The protein operates within cofactor biosynthesis; adenosylcobalamin biosynthesis; sirohydrochlorin from precorrin-2: step 1/1. It functions in the pathway porphyrin-containing compound metabolism; siroheme biosynthesis; precorrin-2 from uroporphyrinogen III: step 1/1. It participates in porphyrin-containing compound metabolism; siroheme biosynthesis; siroheme from sirohydrochlorin: step 1/1. Its pathway is porphyrin-containing compound metabolism; siroheme biosynthesis; sirohydrochlorin from precorrin-2: step 1/1. Functionally, multifunctional enzyme that catalyzes the SAM-dependent methylations of uroporphyrinogen III at position C-2 and C-7 to form precorrin-2 via precorrin-1. Then it catalyzes the NAD-dependent ring dehydrogenation of precorrin-2 to yield sirohydrochlorin. Finally, it catalyzes the ferrochelation of sirohydrochlorin to yield siroheme. This Salmonella paratyphi A (strain ATCC 9150 / SARB42) protein is Siroheme synthase.